The chain runs to 485 residues: NADH-quinone oxidoreductase subunit N (485 aa).

A run of 14 helical transmembrane segments spans residues L8–I28, F35–V55, G71–A91, F105–L125, S127–F147, Y159–A179, L203–F223, P235–M255, V271–Q291, L297–Q317, V326–L346, A373–I393, W408–V430, and I455–I475.

The protein belongs to the complex I subunit 2 family. NDH-1 is composed of 13 different subunits. Subunits NuoA, H, J, K, L, M, N constitute the membrane sector of the complex.

It localises to the cell inner membrane. The catalysed reaction is a quinone + NADH + 5 H(+)(in) = a quinol + NAD(+) + 4 H(+)(out). Its function is as follows. NDH-1 shuttles electrons from NADH, via FMN and iron-sulfur (Fe-S) centers, to quinones in the respiratory chain. The immediate electron acceptor for the enzyme in this species is believed to be ubiquinone. Couples the redox reaction to proton translocation (for every two electrons transferred, four hydrogen ions are translocated across the cytoplasmic membrane), and thus conserves the redox energy in a proton gradient. This chain is NADH-quinone oxidoreductase subunit N, found in Shigella dysenteriae serotype 1 (strain Sd197).